Here is a 351-residue protein sequence, read N- to C-terminus: MADTEKSLQSLDPIPVDVLFEIFLNLPAKFLARFVCVSKLWAKIIRNQDFIRSFSFRSFRENKQHRLLFAFKNQIKGYQENWYFFSKSTHVSTPLYEPNSLVLPDQNINKFEALVGEEPPDFESSTVCHLKKMRYQNPSYVHGLISFLYGEEQIICNPSIGKSINLPTLGSSETIIGSFLGYDPIHAQYKVLCLNKSSLQFCGHQVLTLGAQNCSWRMIQCPTPHYPGTTSVCIDGVLYYSASRGFTMHEPLNLVRFDLRTESLEIASVFPEDFKSSVKPSLINYRGKVAVFSKYFCGDFGLWVLEDAKKQQWSKEQRISIRRGVIGRLPQGLQILGTSDMGEVIFAPNYF.

In terms of domain architecture, F-box spans 8 to 54 (LQSLDPIPVDVLFEIFLNLPAKFLARFVCVSKLWAKIIRNQDFIRSF).

The polypeptide is F-box protein At1g47810 (Arabidopsis thaliana (Mouse-ear cress)).